The sequence spans 1393 residues: DNA-directed RNA polymerase subunit beta' (1393 aa).

Zn(2+) contacts are provided by C72, C74, C87, and C90. D463, D465, and D467 together coordinate Mg(2+). The Zn(2+) site is built by C812, C887, C894, and C897.

It belongs to the RNA polymerase beta' chain family. As to quaternary structure, the RNAP catalytic core consists of 2 alpha, 1 beta, 1 beta' and 1 omega subunit. When a sigma factor is associated with the core the holoenzyme is formed, which can initiate transcription. Mg(2+) serves as cofactor. It depends on Zn(2+) as a cofactor.

The catalysed reaction is RNA(n) + a ribonucleoside 5'-triphosphate = RNA(n+1) + diphosphate. Its function is as follows. DNA-dependent RNA polymerase catalyzes the transcription of DNA into RNA using the four ribonucleoside triphosphates as substrates. The protein is DNA-directed RNA polymerase subunit beta' of Chlamydia caviae (strain ATCC VR-813 / DSM 19441 / 03DC25 / GPIC) (Chlamydophila caviae).